A 1082-amino-acid chain; its full sequence is AP-3 complex subunit beta-2 (1082 aa).

Residues 1–30 (MSAAPAYSEDKGGSAGPGEPEYGHDPASGG) are disordered. Ser272 and Ser282 each carry phosphoserine. Over residues 666–677 (NREKRKEKEKPF) the composition is skewed to basic and acidic residues. A disordered region spans residues 666 to 801 (NREKRKEKEK…KTPPGSKSAP (136 aa)). A compositionally biased stretch (acidic residues) spans 691–700 (ADSEPESESE). A compositionally biased stretch (low complexity) spans 704-715 (KSSSGSGSGESS). Acidic residues-rich tracts occupy residues 716–726 (SESDNEEEDEE) and 775–784 (VTSESEEEQV).

The protein belongs to the adaptor complexes large subunit family. As to quaternary structure, adaptor protein complex 3 (AP-3) is a heterotetramer composed of two large adaptins (delta-type subunit AP3D1 and beta-type subunit AP3B1 or AP3B2), a medium adaptin (mu-type subunit AP3M1 or AP3M2) and a small adaptin (sigma-type subunit APS1 or AP3S2). AP-3 associates with the BLOC-1 complex.

It localises to the cytoplasmic vesicle. It is found in the clathrin-coated vesicle membrane. The protein resides in the golgi apparatus. Functionally, subunit of non-clathrin- and clathrin-associated adaptor protein complex 3 (AP-3) that plays a role in protein sorting in the late-Golgi/trans-Golgi network (TGN) and/or endosomes. The AP complexes mediate both the recruitment of clathrin to membranes and the recognition of sorting signals within the cytosolic tails of transmembrane cargo molecules. AP-3 appears to be involved in the sorting of a subset of transmembrane proteins targeted to lysosomes and lysosome-related organelles. In concert with the BLOC-1 complex, AP-3 is required to target cargos into vesicles assembled at cell bodies for delivery into neurites and nerve terminals. The sequence is that of AP-3 complex subunit beta-2 (Ap3b2) from Mus musculus (Mouse).